The following is a 306-amino-acid chain: Acetyl-coenzyme A carboxylase carboxyl transferase subunit beta (306 aa).

The CoA carboxyltransferase N-terminal domain maps to 25-294; it reads LWIKCPETGE…TVVGANDDKT (270 aa).

This sequence belongs to the AccD/PCCB family. As to quaternary structure, acetyl-CoA carboxylase is a heterohexamer composed of biotin carboxyl carrier protein (AccB), biotin carboxylase (AccC) and two subunits each of ACCase subunit alpha (AccA) and ACCase subunit beta (AccD).

The protein resides in the cytoplasm. The catalysed reaction is N(6)-carboxybiotinyl-L-lysyl-[protein] + acetyl-CoA = N(6)-biotinyl-L-lysyl-[protein] + malonyl-CoA. The protein operates within lipid metabolism; malonyl-CoA biosynthesis; malonyl-CoA from acetyl-CoA: step 1/1. Its function is as follows. Component of the acetyl coenzyme A carboxylase (ACC) complex. Biotin carboxylase (BC) catalyzes the carboxylation of biotin on its carrier protein (BCCP) and then the CO(2) group is transferred by the transcarboxylase to acetyl-CoA to form malonyl-CoA. The chain is Acetyl-coenzyme A carboxylase carboxyl transferase subunit beta from Allorhizobium ampelinum (strain ATCC BAA-846 / DSM 112012 / S4) (Agrobacterium vitis (strain S4)).